Consider the following 352-residue polypeptide: Probable dual-specificity RNA methyltransferase RlmN (352 aa).

Glu92 acts as the Proton acceptor in catalysis. The Radical SAM core domain maps to 98-328 (YKHGFTACIS…ATIRREMGTD (231 aa)). A disulfide bridge links Cys105 with Cys333. 3 residues coordinate [4Fe-4S] cluster: Cys112, Cys116, and Cys119. Residues 159–160 (GE), Ser191, 214–216 (SLH), and Asn290 contribute to the S-adenosyl-L-methionine site. Cys333 (S-methylcysteine intermediate) is an active-site residue.

This sequence belongs to the radical SAM superfamily. RlmN family. [4Fe-4S] cluster is required as a cofactor.

The protein localises to the cytoplasm. The enzyme catalyses adenosine(2503) in 23S rRNA + 2 reduced [2Fe-2S]-[ferredoxin] + 2 S-adenosyl-L-methionine = 2-methyladenosine(2503) in 23S rRNA + 5'-deoxyadenosine + L-methionine + 2 oxidized [2Fe-2S]-[ferredoxin] + S-adenosyl-L-homocysteine. It catalyses the reaction adenosine(37) in tRNA + 2 reduced [2Fe-2S]-[ferredoxin] + 2 S-adenosyl-L-methionine = 2-methyladenosine(37) in tRNA + 5'-deoxyadenosine + L-methionine + 2 oxidized [2Fe-2S]-[ferredoxin] + S-adenosyl-L-homocysteine. Functionally, specifically methylates position 2 of adenine 2503 in 23S rRNA and position 2 of adenine 37 in tRNAs. This Alkaliphilus metalliredigens (strain QYMF) protein is Probable dual-specificity RNA methyltransferase RlmN.